Here is a 1086-residue protein sequence, read N- to C-terminus: Formin-like protein 2 (1086 aa).

Gly2 carries N-myristoyl glycine lipidation. A GBD/FH3 domain is found at Leu23–Glu469. Ser188 is modified (phosphoserine). Residues Ser513–Leu597 form a disordered region. The segment covering Pro525–Ser537 has biased composition (pro residues). A compositionally biased stretch (polar residues) spans Asp538–Pro547. 2 stretches are compositionally biased toward pro residues: residues Val548–Gly576 and Pro583–Leu597. An FH2 domain is found at Ile616–Ala1007. Residues Asn1040–Val1079 enclose the DAD domain.

The protein belongs to the formin homology family.

Its subcellular location is the cytoplasm. In terms of biological role, plays a role in the regulation of cell morphology and cytoskeletal organization. Required in the cortical actin filament dynamics. This Homo sapiens (Human) protein is Formin-like protein 2.